We begin with the raw amino-acid sequence, 179 residues long: Acireductone dioxygenase (179 aa).

Fe(2+)-binding residues include histidine 88, histidine 90, glutamate 94, and histidine 133. Residues histidine 88, histidine 90, glutamate 94, and histidine 133 each coordinate Ni(2+).

Belongs to the acireductone dioxygenase (ARD) family. Monomer. Interacts with MMP14. Fe(2+) serves as cofactor. Requires Ni(2+) as cofactor.

It is found in the cytoplasm. The protein resides in the nucleus. The protein localises to the cell membrane. It catalyses the reaction 1,2-dihydroxy-5-(methylsulfanyl)pent-1-en-3-one + O2 = 4-methylsulfanyl-2-oxobutanoate + formate + 2 H(+). It carries out the reaction 1,2-dihydroxy-5-(methylsulfanyl)pent-1-en-3-one + O2 = 3-(methylsulfanyl)propanoate + CO + formate + 2 H(+). It functions in the pathway amino-acid biosynthesis; L-methionine biosynthesis via salvage pathway; L-methionine from S-methyl-5-thio-alpha-D-ribose 1-phosphate: step 5/6. Functionally, catalyzes 2 different reactions between oxygen and the acireductone 1,2-dihydroxy-3-keto-5-methylthiopentene (DHK-MTPene) depending upon the metal bound in the active site. Fe-containing acireductone dioxygenase (Fe-ARD) produces formate and 2-keto-4-methylthiobutyrate (KMTB), the alpha-ketoacid precursor of methionine in the methionine recycle pathway. Ni-containing acireductone dioxygenase (Ni-ARD) produces methylthiopropionate, carbon monoxide and formate, and does not lie on the methionine recycle pathway. Also down-regulates cell migration mediated by MMP14. In Macaca mulatta (Rhesus macaque), this protein is Acireductone dioxygenase.